The following is a 988-amino-acid chain: Squamosa promoter-binding-like protein 16 (988 aa).

The segment at 52–79 is disordered; the sequence is GTPVDLTRPSKKVRSGSPGSGGGGGGNY. Residues 69–78 show a composition bias toward gly residues; it reads PGSGGGGGGN. The SBP-type zinc-finger motif lies at 79 to 156; it reads YPKCQVDNCK…DGHNRRRRKT (78 aa). 8 residues coordinate Zn(2+): Cys-82, Cys-87, Cys-104, His-107, Cys-123, Cys-126, His-130, and Cys-142. A Bipartite nuclear localization signal motif is present at residues 139-155; sequence KRSCRRRLDGHNRRRRK. Disordered regions lie at residues 240-262 and 289-416; these read RKNP…SSPS and GFGN…DTST. Composition is skewed to polar residues over residues 250–262, 301–311, and 327–358; these read NPQN…SSPS, LTSSDHSATTS, and RTSS…FTSS. The segment covering 368 to 379 has biased composition (low complexity); the sequence is ASSTKYYSSASS.

It depends on Zn(2+) as a cofactor.

The protein localises to the nucleus. Trans-acting factor that binds specifically to the consensus nucleotide sequence 5'-TNCGTACAA-3'. The polypeptide is Squamosa promoter-binding-like protein 16 (SPL16) (Arabidopsis thaliana (Mouse-ear cress)).